A 296-amino-acid polypeptide reads, in one-letter code: Phosphatidylglycerol--prolipoprotein diacylglyceryl transferase (296 aa).

Transmembrane regions (helical) follow at residues 10-30 (IAFS…LAAF), 57-77 (LLFY…MLFY), 92-112 (VWEG…ACWL), and 119-139 (LHFF…LGFG). An a 1,2-diacyl-sn-glycero-3-phospho-(1'-sn-glycerol)-binding site is contributed by arginine 140. 3 helical membrane-spanning segments follow: residues 194–214 (QLYE…TFSM), 220–240 (YAVS…VEFV), and 254–274 (WLTM…VLLA).

It belongs to the Lgt family.

It localises to the cell inner membrane. It carries out the reaction L-cysteinyl-[prolipoprotein] + a 1,2-diacyl-sn-glycero-3-phospho-(1'-sn-glycerol) = an S-1,2-diacyl-sn-glyceryl-L-cysteinyl-[prolipoprotein] + sn-glycerol 1-phosphate + H(+). It participates in protein modification; lipoprotein biosynthesis (diacylglyceryl transfer). Functionally, catalyzes the transfer of the diacylglyceryl group from phosphatidylglycerol to the sulfhydryl group of the N-terminal cysteine of a prolipoprotein, the first step in the formation of mature lipoproteins. This Xanthomonas axonopodis pv. citri (strain 306) protein is Phosphatidylglycerol--prolipoprotein diacylglyceryl transferase.